The primary structure comprises 216 residues: Ribose-5-phosphate isomerase A (216 aa).

Substrate contacts are provided by residues 26-29, 79-82, and 92-95; these read TGST, DGAD, and KGGG. Catalysis depends on Glu-101, which acts as the Proton acceptor. Lys-119 serves as a coordination point for substrate.

It belongs to the ribose 5-phosphate isomerase family. As to quaternary structure, homodimer.

It catalyses the reaction aldehydo-D-ribose 5-phosphate = D-ribulose 5-phosphate. Its pathway is carbohydrate degradation; pentose phosphate pathway; D-ribose 5-phosphate from D-ribulose 5-phosphate (non-oxidative stage): step 1/1. Functionally, catalyzes the reversible conversion of ribose-5-phosphate to ribulose 5-phosphate. The protein is Ribose-5-phosphate isomerase A of Legionella pneumophila (strain Corby).